A 537-amino-acid chain; its full sequence is MDCLIANINENDQFLERLKESESLLNTFYQYDAMSPESFEQALNAPNNGREQELASVISNYMSDLELTEAQQINIDKLKKGAKVVIGGQQAGLFGGPLYTFHKILSIVNLSRQLNEEYNKEVVPVFWIAGEDHDFDEVNHTYVFNTEKAKLHKVKYHTMTPPESNVSRFIPDKDKMLEALDDFLVQIPETAHTNHLRNEVQHIIKNYASWSDMFKALLHIVFKEYGVLLIDAQDPKLRHLEKPILKEMLKKHDEVDRAFRQRQAETVEAGLAEMIQTDTNVHLFLHEDDMRQLLTYEDGHYYTSKSQTAYTLDELLEIVENTPERFSNNVVTRPIMEEWLFNTVSFIGGPSEIKYWAELKAAFDVLDVTMPIVLPRMKITYITKRIEKLLKRYDINAEHVIADGIDNDKNKFIRAHASEQFLNELDQLEAQQKETYERLAAEVQGNEDNKNLVEKNNQIHQSQYDYLRKRYFINIERENAISMKHFRELNETLHPMGGLQERVWNALQFMNEFGTDMFSPSIYPPLRYTLKQIIIKP.

The stretch at Ala417–Asn457 forms a coiled coil.

The protein belongs to the BshC family.

Functionally, involved in bacillithiol (BSH) biosynthesis. May catalyze the last step of the pathway, the addition of cysteine to glucosamine malate (GlcN-Mal) to generate BSH. The chain is Putative cysteine ligase BshC from Staphylococcus carnosus (strain TM300).